Reading from the N-terminus, the 380-residue chain is Protein neprosin (380 aa).

A signal peptide spans 1 to 24; it reads MQAKFFTFVILSSVFYFNYPLAEA. Positions 25–128 are cleaved as a propeptide — activation peptide; it reads RSIQARLANK…QFPNLKFAPP (104 aa). The cysteines at positions 52 and 98 are disulfide-linked. N-linked (GlcNAc...) asparagine glycosylation is found at asparagine 68, asparagine 145, and asparagine 152. The 252-residue stretch at 129–380 folds into the Neprosin PEP catalytic domain; it reads SANTNHQYAV…YLFYGGPGCQ (252 aa). Residue glutamate 188 is part of the active site. The cysteines at positions 219 and 224 are disulfide-linked. Asparagine 253 carries N-linked (GlcNAc...) asparagine glycosylation. Glutamate 297 is an active-site residue. A disulfide bridge connects residues cysteine 358 and cysteine 379.

This sequence belongs to the peptidase G3 family.

The protein localises to the secreted. It carries out the reaction Hydrolysis of Pro-|-Xaa &gt;&gt; Ala-|-Xaa in oligopeptides.. Its activity is regulated as follows. Weakly inhibited by the aspartic protease inhibitor pepstatin. Weakly inhibited by pepstatin A (IC(50) of 140 uM) and 1,2-epoxy-3-(p-nitrophenoxy)propane (EPNP) (IC(50) of 480 uM). Activity is not affected by the POP inhibitor Z-Pro-prolinal inhibitor or the denaturant urea. In terms of biological role, glutamic endopeptidase that preferentially cleaves peptide bonds on the C-terminal side of proline residues. Also cleaves peptide bonds on the C-terminal side of alanine residues but with less efficiency. In contrast to most proline-cleaving enzymes, effectively degrades proteins of any size. Found in the viscoelastic fluid of the pitcher, and so likely functions in the digestion of their prey. The sequence is that of Protein neprosin from Nepenthes x ventrata (Red tropical pitcher plant).